Consider the following 294-residue polypeptide: 2,4-diacetylphloroglucinol hydrolase (294 aa).

The Zn(2+) site is built by histidine 129, glutamate 160, histidine 270, and glutamate 274.

The protein belongs to the DAPG/phloretin hydrolase family. In terms of assembly, homodimer. Requires Zn(2+) as cofactor.

It catalyses the reaction 2,4-diacetylphloroglucinol + H2O = 2-acetylphloroglucinol + acetate. With respect to regulation, specifically and significantly activated by CoCl(2). Competitively inhibited by MAPG, but not by 2-hydroxy- and 4-hydroxyacetophenone. Functionally, hydrolase that specifically degrades the potent antimicrobial compound 2,4-diacetylphloroglucinol (DAPG) to equimolar amounts of mildly toxic monoacetylphloroglucinol (MAPG) and acetate. This is 2,4-diacetylphloroglucinol hydrolase from Pseudomonas sp.